We begin with the raw amino-acid sequence, 322 residues long: D-alanine--D-alanine ligase (322 aa).

Residues 108-311 enclose the ATP-grasp domain; the sequence is KEFYYNAELP…FPSLLDTLIE (204 aa). 136–192 is a binding site for ATP; that stretch reads IEDLGLPLVVKPACAGSSIGISLAHTEEELLAGINHARDCSAGAIMVEQFIKGRELT. Residues Asp-265, Glu-278, and Asn-280 each coordinate Mg(2+).

This sequence belongs to the D-alanine--D-alanine ligase family. Mg(2+) serves as cofactor. It depends on Mn(2+) as a cofactor.

It is found in the cytoplasm. The enzyme catalyses 2 D-alanine + ATP = D-alanyl-D-alanine + ADP + phosphate + H(+). It functions in the pathway cell wall biogenesis; peptidoglycan biosynthesis. Cell wall formation. The polypeptide is D-alanine--D-alanine ligase (Desulfotalea psychrophila (strain LSv54 / DSM 12343)).